Here is a 206-residue protein sequence, read N- to C-terminus: Glycerol-3-phosphate acyltransferase 1 (206 aa).

Helical transmembrane passes span Ile14–Leu34, Ala67–Leu87, Ala91–Phe111, Leu124–Phe144, and Tyr148–Gly168.

It belongs to the PlsY family. Probably interacts with PlsX.

The protein localises to the cell inner membrane. It carries out the reaction an acyl phosphate + sn-glycerol 3-phosphate = a 1-acyl-sn-glycero-3-phosphate + phosphate. It functions in the pathway lipid metabolism; phospholipid metabolism. In terms of biological role, catalyzes the transfer of an acyl group from acyl-phosphate (acyl-PO(4)) to glycerol-3-phosphate (G3P) to form lysophosphatidic acid (LPA). This enzyme utilizes acyl-phosphate as fatty acyl donor, but not acyl-CoA or acyl-ACP. The protein is Glycerol-3-phosphate acyltransferase 1 of Rhizobium johnstonii (strain DSM 114642 / LMG 32736 / 3841) (Rhizobium leguminosarum bv. viciae).